Here is a 362-residue protein sequence, read N- to C-terminus: Transcription factor bHLH128 (362 aa).

A compositionally biased stretch (low complexity) spans 1 to 16 (MYQSSSSTSSSSQRSS). Disordered regions lie at residues 1-23 (MYQS…GGGL), 78-106 (SDST…SNKD), 120-140 (SQQH…YSLA), and 162-184 (LNQP…HSRL). Residues 78 to 96 (SDSTTCGVNNSSDGQKQLG) are compositionally biased toward polar residues. Positions 162-173 (LNQPTSDYSPQG) are enriched in polar residues. Position 189 is a phosphoserine (Ser-189). Residues 289 to 339 (CATHPRSIAERERRTRISGKLKKLQDLVPNMDKQTSYSDMLDLAVQHIKGL) form the bHLH domain.

As to quaternary structure, homodimer.

It is found in the nucleus. The chain is Transcription factor bHLH128 (BHLH128) from Arabidopsis thaliana (Mouse-ear cress).